The chain runs to 566 residues: Insulinoma-associated protein 2 (566 aa).

Residues 1–20 form an SNAG domain region; sequence MPRGFLVKRTKRTGGLYRVR. A disordered region spans residues 32–117; sequence QGAPPFLEEA…PSPSPAKPAG (86 aa). The span at 103–113 shows a compositional bias: pro residues; sequence GPSPSPSPSPA. Residues 263-283 form a C2H2-type 1; atypical zinc finger; it reads FICQLCKEQYADPFALAQHRC. The C2H2-type 2 zinc-finger motif lies at 291–313; sequence YRCPECDKVFSCPANLASHRRWH. A disordered region spans residues 310 to 418; the sequence is RRWHKPRPAA…RRVPVPGSTS (109 aa). Low complexity predominate over residues 318 to 348; that stretch reads AAANAATVSSADGKPPSSSSSSSRDSGAIAS. The span at 352 to 369 shows a compositional bias: basic and acidic residues; that stretch reads EGKENSRIERTADQHPQA. 3 C2H2-type zinc fingers span residues 426-448, 470-492, and 525-548; these read FVCP…LSTH, FACP…RLWH, and FSCK…NKCH.

Expressed in heart, liver, skeletal muscle, kidney and pancreas, and, to a lesser extent, in brain, lung and spleen. In the pancreas, expressed in islet cells, including insulin- and glucagon-producing alpha- and beta-cells, but not in acinar cells (at protein level). Detected in adrenal glands, particularly in the deeper layer of the cortex (at protein level).

It localises to the cytoplasm. It is found in the nucleus. May function as a growth suppressor or tumor suppressor in liver cells and in certain neurons. The protein is Insulinoma-associated protein 2 (INSM2) of Homo sapiens (Human).